The following is a 114-amino-acid chain: C-X-C motif chemokine 6 (114 aa).

A signal peptide spans 1 to 37; sequence MSLPSSRAARVPGPSGSLCALLALLLLLTPPGPLASA. Disulfide bonds link Cys49/Cys75 and Cys51/Cys91.

It belongs to the intercrine alpha (chemokine CxC) family.

The protein localises to the secreted. Chemotactic for neutrophil granulocytes. Signals through binding and activation of its receptors (CXCR1 and CXCR2). In addition to its chemotactic and angiogenic properties, it has strong antibacterial activity against Gram-positive and Gram-negative bacteria (90-fold-higher when compared to CXCL5 and CXCL7). This is C-X-C motif chemokine 6 (CXCL6) from Homo sapiens (Human).